We begin with the raw amino-acid sequence, 290 residues long: Ribosome-inactivating protein bryodin I (290 aa).

A signal peptide spans 1-23 (MIKLLVLWLLILTIFLKSPTVEG). Residues Glu-183 and Glu-212 contribute to the active site. N-linked (GlcNAc...) asparagine glycans are attached at residues Asn-214 and Asn-250. Positions 271 to 290 (AIGEDISMTLIGFEHGLYGI) are cleaved as a propeptide — removed in mature form.

The protein belongs to the ribosome-inactivating protein family. Type 1 RIP subfamily. Post-translationally, appears to undergo proteolytic cleavage in the C-terminal to produce a shorter protein.

The enzyme catalyses Endohydrolysis of the N-glycosidic bond at one specific adenosine on the 28S rRNA.. Functionally, ribosome-inactivating protein of type 1, inhibits protein synthesis in animal cells. The sequence is that of Ribosome-inactivating protein bryodin I from Bryonia dioica (Red bryony).